The chain runs to 420 residues: Transcription termination factor Rho (420 aa).

The Rho RNA-BD domain occupies 49 to 124 (DIFGGGVLEI…LKVDQVNDDK (76 aa)). ATP-binding positions include 170-175 (GKGQRG), 182-187 (KAGKTM), and arginine 213.

The protein belongs to the Rho family. In terms of assembly, homohexamer. The homohexamer assembles into an open ring structure.

Functionally, facilitates transcription termination by a mechanism that involves Rho binding to the nascent RNA, activation of Rho's RNA-dependent ATPase activity, and release of the mRNA from the DNA template. The polypeptide is Transcription termination factor Rho (Haemophilus influenzae (strain ATCC 51907 / DSM 11121 / KW20 / Rd)).